Here is a 243-residue protein sequence, read N- to C-terminus: Terpene cyclase janB (243 aa).

The next 7 membrane-spanning stretches (helical) occupy residues 19-39 (LADL…VGMV), 48-68 (YGMA…YCVF), 77-97 (LGVF…AIIF), 112-132 (LPWI…ALAA), 134-154 (IGPS…LSVG), 172-194 (LWLS…WMYW), and 205-225 (LVLW…VCFW).

This sequence belongs to the paxB family.

It localises to the membrane. It participates in secondary metabolite biosynthesis. Functionally, terpene cyclase; part of the gene cluster that mediates the biosynthesis of the indole diterpenes janthitremanes such as shearinine K or shearinine A. The geranylgeranyl diphosphate (GGPP) synthase janG catalyzes the first step in janthitremane biosynthesis via conversion of farnesyl pyrophosphate and isopentyl pyrophosphate into geranylgeranyl pyrophosphate (GGPP). Condensation of indole-3-glycerol phosphate with GGPP by the prenyl transferase janC then forms 3-geranylgeranylindole (3-GGI). Epoxidation by the FAD-dependent monooxygenase janM leads to a epoxidized-GGI that is substrate of the terpene cyclase janB for cyclization to yield paspaline. Paspaline is subsequently converted to 13-desoxypaspaline by the cytochrome P450 monooxygenase janP, via beta-PC-M6 in a series of alpha-face oxidations. The cytochrome P450 monooxygenase janQ is proposed to carry out sequential beta-face oxidation steps at C-7 and C-13 of 13-desoxypaspaline to form paspalicine and paspalinine respectively. The indole diterpene prenyltransferase janD may then convert paspalinine into shearinine K which is substrate of janO and/or additional enzymes for oxidation and cyclization to generate shearinine A. The protein is Terpene cyclase janB of Penicillium janthinellum (Penicillium vitale).